Reading from the N-terminus, the 471-residue chain is Glutamyl-tRNA(Gln) amidotransferase subunit A, mitochondrial (471 aa).

Active-site charge relay system residues include Lys64 and Ser141. The active-site Acyl-ester intermediate is Ser165.

The protein belongs to the amidase family. GatA subfamily. As to quaternary structure, subunit of the heterotrimeric GatCAB amidotransferase (AdT) complex, composed of A, B and C subunits.

The protein resides in the mitochondrion. The catalysed reaction is L-glutamyl-tRNA(Gln) + L-glutamine + ATP + H2O = L-glutaminyl-tRNA(Gln) + L-glutamate + ADP + phosphate + H(+). In terms of biological role, allows the formation of correctly charged Gln-tRNA(Gln) through the transamidation of misacylated Glu-tRNA(Gln) in the mitochondria. The reaction takes place in the presence of glutamine and ATP through an activated gamma-phospho-Glu-tRNA(Gln). The sequence is that of Glutamyl-tRNA(Gln) amidotransferase subunit A, mitochondrial from Schizosaccharomyces pombe (strain 972 / ATCC 24843) (Fission yeast).